Reading from the N-terminus, the 259-residue chain is uncharacterized protein (259 aa).

The next 6 membrane-spanning stretches (helical) occupy residues 9–31, 84–106, 126–148, 153–175, 196–215, and 230–252; these read ILSVLTLFIFFQYVAKFGILESL, LLGGEILDGLAFGFFFLVYLQWF, FLIYRFAITLFGSTICFYRFVFG, SIVAGILTFALFLSQRALNLEYV, HFILSAPAMGVGATAGYIAA, and TFRAFLLLTIVVVCILTLGSWLG.

It is found in the cell membrane. This is an uncharacterized protein from Archaeoglobus fulgidus (strain ATCC 49558 / DSM 4304 / JCM 9628 / NBRC 100126 / VC-16).